The following is a 97-amino-acid chain: Ferredoxin-3 (97 aa).

2 4Fe-4S ferredoxin-type domains span residues 18–47 (FAES…LKAL) and 65–95 (KVMV…HNPL). 8 residues coordinate [4Fe-4S] cluster: Cys-27, Cys-30, Cys-33, Cys-37, Cys-75, Cys-78, Cys-81, and Cys-85.

As to quaternary structure, homodimer. [4Fe-4S] cluster serves as cofactor.

Functionally, ferredoxins are iron-sulfur proteins that transfer electrons in a wide variety of metabolic reactions. This chain is Ferredoxin-3 (fdxB), found in Nostoc sp. (strain PCC 7120 / SAG 25.82 / UTEX 2576).